The primary structure comprises 81 residues: Cytotoxin 1d/1e (81 aa).

A signal peptide spans 1-21 (MKTLLLTLVVVTIVCLDLGYT). Cystine bridges form between C24-C42, C35-C59, C63-C74, and C75-C80.

The protein belongs to the three-finger toxin family. Short-chain subfamily. Type IA cytotoxin sub-subfamily. In terms of assembly, monomer in solution; Homodimer and oligomer in the presence of negatively charged lipids forming a pore with a size ranging between 20 and 30 Angstroms. Expressed by the venom gland.

The protein resides in the secreted. Its subcellular location is the target cell membrane. Its function is as follows. Shows cytolytic activity on many different cells by forming pore in lipid membranes. In vivo, increases heart rate or kills the animal by cardiac arrest. In addition, it binds to heparin with high affinity, interacts with Kv channel-interacting protein 1 (KCNIP1) in a calcium-independent manner, and binds to integrin alpha-V/beta-3 (ITGAV/ITGB3) with moderate affinity. The chain is Cytotoxin 1d/1e from Naja atra (Chinese cobra).